Here is a 375-residue protein sequence, read N- to C-terminus: Isopentenyl-diphosphate delta-isomerase (375 aa).

Position 8 to 9 (8 to 9 (RK)) interacts with substrate. Residues Thr-65, 66 to 68 (GMT), Ser-96, and Asn-125 contribute to the FMN site. 96–98 (SQR) contributes to the substrate binding site. Substrate is bound at residue Gln-160. Position 161 (Glu-161) interacts with Mg(2+). Residues Lys-192, Thr-222, 273–275 (GVR), and 294–295 (AL) contribute to the FMN site.

This sequence belongs to the IPP isomerase type 2 family. Homooctamer. Dimer of tetramers. The cofactor is FMN. NADPH serves as cofactor. Mg(2+) is required as a cofactor.

Its subcellular location is the cytoplasm. It catalyses the reaction isopentenyl diphosphate = dimethylallyl diphosphate. Functionally, involved in the biosynthesis of isoprenoids. Catalyzes the 1,3-allylic rearrangement of the homoallylic substrate isopentenyl (IPP) to its allylic isomer, dimethylallyl diphosphate (DMAPP). In Aeropyrum pernix (strain ATCC 700893 / DSM 11879 / JCM 9820 / NBRC 100138 / K1), this protein is Isopentenyl-diphosphate delta-isomerase.